A 129-amino-acid chain; its full sequence is Small ribosomal subunit protein uS11c (129 aa).

The protein belongs to the universal ribosomal protein uS11 family. As to quaternary structure, part of the 30S ribosomal subunit.

The protein localises to the plastid. It localises to the chloroplast. The sequence is that of Small ribosomal subunit protein uS11c from Cyanidium caldarium (Red alga).